Reading from the N-terminus, the 261-residue chain is Sulfur carrier protein FdhD (261 aa).

The active-site Cysteine persulfide intermediate is Cys-105. Mo-bis(molybdopterin guanine dinucleotide) is bound at residue 245–250 (FIRGDR).

It belongs to the FdhD family.

It localises to the cytoplasm. In terms of biological role, required for formate dehydrogenase (FDH) activity. Acts as a sulfur carrier protein that transfers sulfur from IscS to the molybdenum cofactor prior to its insertion into FDH. This chain is Sulfur carrier protein FdhD, found in Listeria monocytogenes serovar 1/2a (strain ATCC BAA-679 / EGD-e).